We begin with the raw amino-acid sequence, 283 residues long: NAD kinase (283 aa).

Residue aspartate 66 is the Proton acceptor of the active site. NAD(+) is bound by residues 66 to 67 (DG), arginine 71, 137 to 138 (ND), histidine 165, aspartate 167, and 178 to 183 (TGYSMS).

It belongs to the NAD kinase family. A divalent metal cation is required as a cofactor.

Its subcellular location is the cytoplasm. It catalyses the reaction NAD(+) + ATP = ADP + NADP(+) + H(+). Involved in the regulation of the intracellular balance of NAD and NADP, and is a key enzyme in the biosynthesis of NADP. Catalyzes specifically the phosphorylation on 2'-hydroxyl of the adenosine moiety of NAD to yield NADP. This is NAD kinase from Agathobacter rectalis (strain ATCC 33656 / DSM 3377 / JCM 17463 / KCTC 5835 / VPI 0990) (Eubacterium rectale).